Consider the following 192-residue polypeptide: Ion-translocating oxidoreductase complex subunit B (192 aa).

The tract at residues 1–26 is hydrophobic; sequence MNAIWIAVAAVSLLGLAFGAILGYAS. In terms of domain architecture, 4Fe-4S spans 32 to 91; that stretch reads EDDPVVEKIDEILPQSQCGQCGYPGCRPYAEAISCNGEKINRCAPGGEAVMLKIAELLNV. C49, C52, C57, C74, C117, C120, C123, C127, C147, C150, C153, and C157 together coordinate [4Fe-4S] cluster. 2 4Fe-4S ferredoxin-type domains span residues 108-137 and 138-167; these read MVAV…GATR and AMHT…LQPV.

Belongs to the 4Fe4S bacterial-type ferredoxin family. RnfB subfamily. As to quaternary structure, the complex is composed of six subunits: RsxA, RsxB, RsxC, RsxD, RsxE and RsxG. It depends on [4Fe-4S] cluster as a cofactor.

It localises to the cell inner membrane. Part of a membrane-bound complex that couples electron transfer with translocation of ions across the membrane. Required to maintain the reduced state of SoxR. The polypeptide is Ion-translocating oxidoreductase complex subunit B (Escherichia coli O8 (strain IAI1)).